The sequence spans 67 residues: MAAKKGKKTSTKKSDYYKVEGNTVERLKKVCPKCGAGVFMAEHLNRFACGKCGYLEYKKNEKAESEE.

4 residues coordinate Zn(2+): Cys31, Cys34, Cys49, and Cys52. The C4-type zinc finger occupies 31-52 (CPKCGAGVFMAEHLNRFACGKC).

Belongs to the eukaryotic ribosomal protein eS31 family. As to quaternary structure, part of the 30S ribosomal subunit. Requires Zn(2+) as cofactor.

The polypeptide is Small ribosomal subunit protein eS31 (Methanococcus maripaludis (strain C6 / ATCC BAA-1332)).